Consider the following 67-residue polypeptide: MSRNLRTALIFGGFISLIGAAFYPIYFRPLMRLEEYKKEQAINRAGIVQEDVQPPGLKVWSDPFGRK.

Over 1-6 (MSRNLR) the chain is Mitochondrial matrix. A helical membrane pass occupies residues 7–27 (TALIFGGFISLIGAAFYPIYF). Residues 28–67 (RPLMRLEEYKKEQAINRAGIVQEDVQPPGLKVWSDPFGRK) lie on the Mitochondrial intermembrane side of the membrane. Position 64 is a phenylalanine amide (phenylalanine 64).

Component of the MITRAC (mitochondrial translation regulation assembly intermediate of cytochrome c oxidase complex) complex, the core components of this complex being COA3/MITRAC12 and COX14. Interacts with COA3/MITRAC12 and COX4I1. Directly interacts with newly synthesized MT-CO1/COX1. As to expression, expressed in the ovary, specifically in granulosa cells of follicles that have passed the primary stage and in oocytes (at protein level).

It is found in the mitochondrion inner membrane. The protein localises to the secreted. Its function is as follows. Component of the MITRAC (mitochondrial translation regulation assembly intermediate of cytochrome c oxidase complex) complex, that regulates cytochrome c oxidase assembly. Promotes the progression of complex assembly after the association of MT-CO1/COX1 with COX4I1 and COX6C. Chaperone-like assembly factor required to stabilize newly synthesized MT-CO1/COX1 and to prevent its premature turnover. Functionally, peptide involved in a broad spectrum of regulatory functions. Is a ligand for GPR173. As part of the reproductive cycle, it regulates gonadotropin-releasing hormone (GnRH) signaling in the hypothalamus and pituitary gland which augments the release of luteinizing hormone. Plays a protective role in memory retention through activation of GNRHR. Regulates the secretion of AVP by hypothalamic neurons. Plays a role in the transduction of the itch sensation. Induces anxiolytic effects, reducing behavior associated with anxiety. Regulates food intake as well as satiation and satiety. In the ovary, it regulates follicular growth by stimulating granulosa cell proliferation by increasing the expression of GPR173, CREB1, CYP19A1, KITLG, FSHR, and LHCGR. It also increases the production of estradiol (E2). In the heart, it regulates contractility and relaxation. It also plays a cardioprotective role during ischemia, where it activates the SAFE and RISK pathways. Stimulates the proliferation and differentiation of preadipocytes. In pancreatic islet cells, it induces proliferation of islet cells as well as the production of INS. This Homo sapiens (Human) protein is Small integral membrane protein 20 (SMIM20).